A 169-amino-acid polypeptide reads, in one-letter code: Succinate dehydrogenase cytochrome b560 subunit, mitochondrial (169 aa).

The transit peptide at 1 to 29 (MAALLLRHVGRHCLRAHLSPQLCIRNAVP) directs the protein to the mitochondrion. Residues 30–62 (LGTTAKEEMERFWNKNLGSNRPLSPHITIYRWS) are Mitochondrial matrix-facing. The helical transmembrane segment at 63–92 (LPMAMSICHRGTGIALSAGVSLFGLSALLL) threads the bilayer. At 93–112 (PGNFESHLELVKSLCLGPTL) the chain is on the mitochondrial intermembrane side. Residues 113-137 (IYTAKFGIVFPLMYHTWNGIRHLIW) traverse the membrane as a helical segment. Residue His-127 participates in heme b binding. The Mitochondrial matrix portion of the chain corresponds to 138-144 (DLGKGLT). A helical membrane pass occupies residues 145 to 166 (IPQLTQSGVVVLILTVLSSVGL). Residues 167 to 169 (AAM) lie on the Mitochondrial intermembrane side of the membrane.

Belongs to the cytochrome b560 family. As to quaternary structure, component of complex II composed of four subunits: the flavoprotein (FP) SDHA, iron-sulfur protein (IP) SDHB, and a cytochrome b560 composed of SDHC and SDHD. Heme b serves as cofactor. Detected in heart muscle (at protein level).

The protein resides in the mitochondrion inner membrane. Its pathway is carbohydrate metabolism; tricarboxylic acid cycle. Membrane-anchoring subunit of succinate dehydrogenase (SDH) that is involved in complex II of the mitochondrial electron transport chain and is responsible for transferring electrons from succinate to ubiquinone (coenzyme Q). SDH also oxidizes malate to the non-canonical enol form of oxaloacetate, enol-oxaloacetate. Enol-oxaloacetate, which is a potent inhibitor of the succinate dehydrogenase activity, is further isomerized into keto-oxaloacetate. This is Succinate dehydrogenase cytochrome b560 subunit, mitochondrial (SDHC) from Sus scrofa (Pig).